The chain runs to 1131 residues: DNA polymerase II large subunit (1131 aa).

It belongs to the archaeal DNA polymerase II family. Heterodimer of a large subunit and a small subunit.

It catalyses the reaction DNA(n) + a 2'-deoxyribonucleoside 5'-triphosphate = DNA(n+1) + diphosphate. The catalysed reaction is Exonucleolytic cleavage in the 3'- to 5'-direction to yield nucleoside 5'-phosphates.. Functionally, possesses two activities: a DNA synthesis (polymerase) and an exonucleolytic activity that degrades single-stranded DNA in the 3'- to 5'-direction. Has a template-primer preference which is characteristic of a replicative DNA polymerase. The polypeptide is DNA polymerase II large subunit (Methanococcus maripaludis (strain C7 / ATCC BAA-1331)).